A 185-amino-acid polypeptide reads, in one-letter code: Photosystem I assembly protein Ycf4 (185 aa).

Transmembrane regions (helical) follow at residues 24-44 and 66-86; these read YIIG…SISS and IIMG…WYLV.

The protein belongs to the Ycf4 family.

It is found in the cellular thylakoid membrane. In terms of biological role, seems to be required for the assembly of the photosystem I complex. In Prochlorococcus marinus (strain MIT 9301), this protein is Photosystem I assembly protein Ycf4.